The sequence spans 240 residues: Ribosomal RNA small subunit methyltransferase G (240 aa).

S-adenosyl-L-methionine is bound by residues G79, F84, 130–131 (AE), and R149.

Belongs to the methyltransferase superfamily. RNA methyltransferase RsmG family.

Its subcellular location is the cytoplasm. In terms of biological role, specifically methylates the N7 position of a guanine in 16S rRNA. This is Ribosomal RNA small subunit methyltransferase G from Lactobacillus acidophilus (strain ATCC 700396 / NCK56 / N2 / NCFM).